Reading from the N-terminus, the 360-residue chain is Aminomethyltransferase (360 aa).

Belongs to the GcvT family. In terms of assembly, the glycine cleavage system is composed of four proteins: P, T, L and H.

It carries out the reaction N(6)-[(R)-S(8)-aminomethyldihydrolipoyl]-L-lysyl-[protein] + (6S)-5,6,7,8-tetrahydrofolate = N(6)-[(R)-dihydrolipoyl]-L-lysyl-[protein] + (6R)-5,10-methylene-5,6,7,8-tetrahydrofolate + NH4(+). Its function is as follows. The glycine cleavage system catalyzes the degradation of glycine. The chain is Aminomethyltransferase from Methylococcus capsulatus (strain ATCC 33009 / NCIMB 11132 / Bath).